The sequence spans 272 residues: uncharacterized protein (272 aa).

Residues 101–130 form a disordered region; sequence CPTGKKNKAPSSLIPKISKTSTSSLTKEDE. Positions 110–125 are enriched in low complexity; sequence PSSLIPKISKTSTSSL. S142 bears the Phosphoserine mark.

This is an uncharacterized protein from Arabidopsis thaliana (Mouse-ear cress).